The sequence spans 444 residues: Acyl-CoA 6-desaturase (444 aa).

Residues methionine 1–proline 130 lie on the Cytoplasmic side of the membrane. Positions phenylalanine 18–glutamate 95 constitute a Cytochrome b5 heme-binding domain. A helical transmembrane segment spans residues leucine 131–valine 151. The Lumenal portion of the chain corresponds to tryptophan 152–glycine 157. A helical transmembrane segment spans residues tryptophan 158 to leucine 178. Over glutamine 179 to lysine 264 the chain is Cytoplasmic. Residues histidine 180–histidine 184 carry the Histidine box-1 motif. Positions histidine 217–histidine 221 match the Histidine box-2 motif. A helical membrane pass occupies residues tyrosine 265–histidine 285. Residues asparagine 286–arginine 305 lie on the Lumenal side of the membrane. A helical transmembrane segment spans residues tyrosine 306 to valine 326. Over arginine 327 to lysine 444 the chain is Cytoplasmic. The Histidine box-3 signature appears at glutamine 382 to histidine 386.

It belongs to the fatty acid desaturase type 1 family.

The protein resides in the endoplasmic reticulum membrane. It carries out the reaction (9Z,12Z)-octadecadienoyl-CoA + 2 Fe(II)-[cytochrome b5] + O2 + 2 H(+) = (6Z,9Z,12Z)-octadecatrienoyl-CoA + 2 Fe(III)-[cytochrome b5] + 2 H2O. The enzyme catalyses (9Z,12Z,15Z)-octadecatrienoyl-CoA + 2 Fe(II)-[cytochrome b5] + O2 + 2 H(+) = (6Z,9Z,12Z,15Z)-octadecatetraenoyl-CoA + 2 Fe(III)-[cytochrome b5] + 2 H2O. The catalysed reaction is (8Z,11Z,14Z,17Z)-eicosatetraenoyl-CoA + 2 Fe(II)-[cytochrome b5] + O2 + 2 H(+) = (5Z,8Z,11Z,14Z,17Z)-eicosapentaenoyl-CoA + 2 Fe(III)-[cytochrome b5] + 2 H2O. It catalyses the reaction (8Z,11Z,14Z)-eicosatrienoyl-CoA + 2 Fe(II)-[cytochrome b5] + O2 + 2 H(+) = (5Z,8Z,11Z,14Z)-eicosatetraenoyl-CoA + 2 Fe(III)-[cytochrome b5] + 2 H2O. It functions in the pathway lipid metabolism; polyunsaturated fatty acid biosynthesis. Its function is as follows. Fatty acid desaturase with bifunctional delta-5 and delta-6 activities. Component of a lipid metabolic pathway that catalyzes the biosynthesis of polyunsaturated fatty acids (PUFA) with preference toward n-3 substrates and Delta-6 function. The polypeptide is Acyl-CoA 6-desaturase (fads2) (Danio rerio (Zebrafish)).